Here is a 297-residue protein sequence, read N- to C-terminus: MSCPPVRVLPVSLAPAQSLGSKDDSLYLDRSGPLDPSKPPLPPPQSTMARGLPINPSFPTRPTSGYHFPLKTAMNPQPAKQGPVFGRQGRGTSARMVTKKPDEDIYLECEPDPVPVLTRSLSSKALIPPVPLPRTSGLPKSVAGYQEARNGAMDGALKAGRRLSASSIAPALSSSVAENGSLLGQPWYSGNCDRQSVERALLHFQKDGAYKVRLSSGPHSSQPFTLAVLLRGRVFNIPIRQLDGGHHYALGREGRNHEELFSSVAAMVQHYTKHPLPLVDGHSGNRGLTYLRFPTKP.

Disordered stretches follow at residues 1 to 61 (MSCP…FPTR) and 74 to 93 (MNPQ…RGTS). Over residues 36–45 (PSKPPLPPPQ) the composition is skewed to pro residues. Residues 187-295 (WYSGNCDRQS…RGLTYLRFPT (109 aa)) enclose the SH2 domain.

This is SH2 domain-containing protein 6 (Sh2d6) from Mus musculus (Mouse).